The chain runs to 356 residues: Branched-chain-amino-acid aminotransferase 6 (356 aa).

N6-(pyridoxal phosphate)lysine is present on K199.

It belongs to the class-IV pyridoxal-phosphate-dependent aminotransferase family. It depends on pyridoxal 5'-phosphate as a cofactor.

Its subcellular location is the cytoplasm. It catalyses the reaction L-leucine + 2-oxoglutarate = 4-methyl-2-oxopentanoate + L-glutamate. It carries out the reaction L-isoleucine + 2-oxoglutarate = (S)-3-methyl-2-oxopentanoate + L-glutamate. The enzyme catalyses L-valine + 2-oxoglutarate = 3-methyl-2-oxobutanoate + L-glutamate. It functions in the pathway amino-acid biosynthesis; L-isoleucine biosynthesis; L-isoleucine from 2-oxobutanoate: step 4/4. The protein operates within amino-acid biosynthesis; L-leucine biosynthesis; L-leucine from 3-methyl-2-oxobutanoate: step 4/4. It participates in amino-acid biosynthesis; L-valine biosynthesis; L-valine from pyruvate: step 4/4. Converts 2-oxo acids to branched-chain amino acids. Acts on leucine, isoleucine and valine. The polypeptide is Branched-chain-amino-acid aminotransferase 6 (BCAT6) (Arabidopsis thaliana (Mouse-ear cress)).